A 115-amino-acid chain; its full sequence is Probable K(+)/H(+) antiporter subunit C (115 aa).

A run of 3 helical transmembrane segments spans residues 4-21 (ILSA…YLLL), 28-47 (VIIG…FGMG), and 75-97 (ALVL…VLLA).

It belongs to the CPA3 antiporters (TC 2.A.63) subunit C family. As to quaternary structure, may form a hetero-oligomeric complex that consists of six subunits: PhaAB, PhaC, PhaD, PhaE, PhaF and PhaG.

The protein resides in the cell membrane. In terms of biological role, part of a K(+) efflux system which is required for the adaptation of R.meliloti to alkaline pH as well as for the infection process during symbiotic nodule development. The protein is Probable K(+)/H(+) antiporter subunit C (phaC) of Rhizobium meliloti (strain 1021) (Ensifer meliloti).